The sequence spans 498 residues: Angiopoietin-1 (498 aa).

An N-terminal signal peptide occupies residues 1–19 (MTVFLSFAFLAAILTHIGC). N92, N122, N154, N243, and N295 each carry an N-linked (GlcNAc...) asparagine glycan. Positions 158 to 254 (RLEIQLLENS…SVLQKQQLEL (97 aa)) form a coiled coil. In terms of domain architecture, Fibrinogen C-terminal spans 277-497 (KEEVKPFRDC…STTMMIRPLD (221 aa)). Disulfide bonds link C286/C315 and C439/C452.

In terms of assembly, homooligomer. Interacts with TEK/TIE2. Interacts with SVEP1/polydom. Interacts with THBD; this interaction significantly inhibits the generation of activated PC and TAFIa/CPB2 by the thrombin/thrombomodulin complex.

It localises to the secreted. In terms of biological role, binds and activates TIE2 receptor by inducing its tyrosine phosphorylation. Implicated in endothelial developmental processes later and distinct from that of VEGF. Appears to play a crucial role in mediating reciprocal interactions between the endothelium and surrounding matrix and mesenchyme. Mediates blood vessel maturation/stability. It may play an important role in the heart early development. The polypeptide is Angiopoietin-1 (ANGPT1) (Sus scrofa (Pig)).